Consider the following 383-residue polypeptide: Succinyl-diaminopimelate desuccinylase (383 aa).

His74 is a binding site for Zn(2+). Asp76 is an active-site residue. Residue Asp107 coordinates Zn(2+). The active-site Proton acceptor is the Glu141. Glu142, Glu170, and His356 together coordinate Zn(2+).

Belongs to the peptidase M20A family. DapE subfamily. Homodimer. Requires Zn(2+) as cofactor. Co(2+) is required as a cofactor.

The enzyme catalyses N-succinyl-(2S,6S)-2,6-diaminopimelate + H2O = (2S,6S)-2,6-diaminopimelate + succinate. It participates in amino-acid biosynthesis; L-lysine biosynthesis via DAP pathway; LL-2,6-diaminopimelate from (S)-tetrahydrodipicolinate (succinylase route): step 3/3. In terms of biological role, catalyzes the hydrolysis of N-succinyl-L,L-diaminopimelic acid (SDAP), forming succinate and LL-2,6-diaminopimelate (DAP), an intermediate involved in the bacterial biosynthesis of lysine and meso-diaminopimelic acid, an essential component of bacterial cell walls. The sequence is that of Succinyl-diaminopimelate desuccinylase from Polynucleobacter necessarius subsp. necessarius (strain STIR1).